We begin with the raw amino-acid sequence, 251 residues long: ATP synthase subunit a (251 aa).

A run of 6 helical transmembrane segments spans residues 30 to 50, 86 to 106, 116 to 136, 145 to 165, 195 to 215, and 219 to 239; these read NSNEMMLLAAVIVTSLFVVAL, FFPFVFTLFAFILIGNILGLF, IAITGALALFVFALSTLVGFW, FFSPPGVPGWLLPLLIPIEIV, FMLMLVSGLGAVGVVAAIIPL, and IALTALEFLVAFLQAYVFAIL.

The protein belongs to the ATPase A chain family. F-type ATPases have 2 components, CF(1) - the catalytic core - and CF(0) - the membrane proton channel. CF(1) has five subunits: alpha(3), beta(3), gamma(1), delta(1), epsilon(1). CF(0) has three main subunits: a(1), b(2) and c(9-12). The alpha and beta chains form an alternating ring which encloses part of the gamma chain. CF(1) is attached to CF(0) by a central stalk formed by the gamma and epsilon chains, while a peripheral stalk is formed by the delta and b chains.

The protein localises to the cell inner membrane. In terms of biological role, key component of the proton channel; it plays a direct role in the translocation of protons across the membrane. The polypeptide is ATP synthase subunit a (Acidiphilium cryptum (strain JF-5)).